The primary structure comprises 288 residues: 4-hydroxy-tetrahydrodipicolinate synthase (288 aa).

Residue Thr42 participates in pyruvate binding. Tyr129 (proton donor/acceptor) is an active-site residue. Lys158 functions as the Schiff-base intermediate with substrate in the catalytic mechanism. Residue Ile200 coordinates pyruvate.

Belongs to the DapA family. Homotetramer; dimer of dimers.

It is found in the cytoplasm. The enzyme catalyses L-aspartate 4-semialdehyde + pyruvate = (2S,4S)-4-hydroxy-2,3,4,5-tetrahydrodipicolinate + H2O + H(+). It participates in amino-acid biosynthesis; L-lysine biosynthesis via DAP pathway; (S)-tetrahydrodipicolinate from L-aspartate: step 3/4. Functionally, catalyzes the condensation of (S)-aspartate-beta-semialdehyde [(S)-ASA] and pyruvate to 4-hydroxy-tetrahydrodipicolinate (HTPA). The sequence is that of 4-hydroxy-tetrahydrodipicolinate synthase from Thermosipho melanesiensis (strain DSM 12029 / CIP 104789 / BI429).